A 1167-amino-acid chain; its full sequence is Integrin alpha-10 (1167 aa).

The N-terminal stretch at 1–22 (MELPFVTHLFLPLVFLTGLCSP) is a signal peptide. The Extracellular portion of the chain corresponds to 23–1122 (FNLDEHHPRL…VVQTRPILIS (1100 aa)). FG-GAP repeat units follow at residues 24–85 (NLDE…HNAP) and 95–154 (QLGN…PQGS). Cysteines 76 and 86 form a disulfide. N-linked (GlcNAc...) asparagine glycosylation is found at asparagine 98, asparagine 234, asparagine 336, and asparagine 364. The VWFA domain occupies 167-350 (DVVIVLDGSN…AALTDIVDAL (184 aa)). 5 FG-GAP repeats span residues 361 to 412 (HAEN…LFPP), 417 to 470 (EDEF…KDGA), 472 to 534 (RVAQ…SLLT), 535 to 593 (LQGT…GVRP), and 597 to 657 (QRIA…VTPQ). 12 residues coordinate Ca(2+): aspartate 494, aspartate 496, aspartate 498, aspartate 502, aspartate 558, asparagine 560, aspartate 562, aspartate 566, aspartate 620, aspartate 622, aspartate 624, and aspartate 628. Cystine bridges form between cysteine 666–cysteine 675 and cysteine 681–cysteine 736. Residues asparagine 733 and asparagine 763 are each glycosylated (N-linked (GlcNAc...) asparagine). Cysteine 789 and cysteine 795 form a disulfide bridge. N-linked (GlcNAc...) asparagine glycosylation is found at asparagine 839, asparagine 921, asparagine 1011, asparagine 1018, and asparagine 1039. The chain crosses the membrane as a helical span at residues 1123-1145 (LWILIGSVLGGLLLLALLVFCLW). Residues 1146–1167 (KLGFFAHKKIPEEEKREEKLEQ) lie on the Cytoplasmic side of the membrane.

This sequence belongs to the integrin alpha chain family. Heterodimer of an alpha and a beta subunit. Alpha-10 associates with beta-1. Widely expressed with highest expression in muscle and heart. Found in articular cartilage.

The protein resides in the membrane. Integrin alpha-10/beta-1 is a receptor for collagen. This chain is Integrin alpha-10 (ITGA10), found in Homo sapiens (Human).